Consider the following 1086-residue polypeptide: Bifunctional helicase and thymine dioxygenase JBP2 (1086 aa).

A thymine dioxygenase region spans residues 1–518; the sequence is MPVPSHVSVA…PPIYLPGRLL (518 aa). Residues 187–220 are disordered; sequence DESNRGVLFNSDSFGNGRGGSSISSSERSVDEND. Fe cation contacts are provided by histidine 393, aspartate 395, and histidine 443. Arginine 457 is a 2-oxoglutarate binding site. The segment at 519–1084 is DNA Helicase; it reads EVLSPVQQAA…RHGDTVRSES (566 aa). In terms of domain architecture, Helicase ATP-binding spans 533-708; the sequence is VDRLSKGNGC…YRLIGWINSD (176 aa). 546–553 provides a ligand contact to ATP; that stretch reads LTMGLGKT. The DEAH box motif lies at 659-662; it reads DEGH. The Helicase C-terminal domain maps to 883 to 1041; sequence VLISILHSIR…RAVPPEELLD (159 aa).

The protein in the C-terminal section; belongs to the SNF2/RAD54 helicase family. In the N-terminal section; belongs to the TET family. JBP2 subfamily. Fe(2+) is required as a cofactor.

The protein resides in the nucleus. It catalyses the reaction ATP + H2O = ADP + phosphate + H(+). The enzyme catalyses thymine + 2-oxoglutarate + O2 = 5-hydroxymethyluracil + succinate + CO2. Dioxygenase that catalyzes the first step of DNA base J (beta-d-glucosyl-HOMedU) biosynthesis by converting thymine to 5-hydroxymethyluracil (HOMedU). DNA base J is a hypermodified thymidine residue found in the genome of kinetoplastid parasites, which is localized primarily to repetitive DNA, namely the telomeres, and is implicated in the regulation of antigenic variation. Probably also acts as a DNA helicase. Recognizes and binds specific regions of the genome, hydrolyzes ATP and allows the DNA base J de novo synthesis. Involved in initial synthesis of DNA base J, JBP1 being able to act via the basal level of DNA base J and propagate further synthesis. In contrast to JBP1, it does not specifically bind DNA base J, however it binds chromatin. This is Bifunctional helicase and thymine dioxygenase JBP2 (JBP2) from Trypanosoma cruzi (strain CL Brener).